The sequence spans 488 residues: Glutamyl-tRNA(Gln) amidotransferase subunit A, mitochondrial (488 aa).

Catalysis depends on charge relay system residues Lys62 and Ser140. The active-site Acyl-ester intermediate is Ser164. The tract at residues 205 to 228 (GHDDNDPTSITPQTRERIQDRLSR) is disordered. A compositionally biased stretch (basic and acidic residues) spans 218–227 (TRERIQDRLS).

The protein belongs to the amidase family. GatA subfamily. As to quaternary structure, subunit of the heterotrimeric GatCAB amidotransferase (AdT) complex, composed of A, B and C subunits.

The protein resides in the mitochondrion. It catalyses the reaction L-glutamyl-tRNA(Gln) + L-glutamine + ATP + H2O = L-glutaminyl-tRNA(Gln) + L-glutamate + ADP + phosphate + H(+). Allows the formation of correctly charged Gln-tRNA(Gln) through the transamidation of misacylated Glu-tRNA(Gln) in the mitochondria. The reaction takes place in the presence of glutamine and ATP through an activated gamma-phospho-Glu-tRNA(Gln). This is Glutamyl-tRNA(Gln) amidotransferase subunit A, mitochondrial from Tuber melanosporum (strain Mel28) (Perigord black truffle).